An 876-amino-acid polypeptide reads, in one-letter code: Alanine--tRNA ligase (876 aa).

At Lys-74 the chain carries N6-acetyllysine. Residues His-564, His-568, Cys-666, and His-670 each coordinate Zn(2+).

Belongs to the class-II aminoacyl-tRNA synthetase family. Homotetramer. It depends on Zn(2+) as a cofactor.

Its subcellular location is the cytoplasm. The enzyme catalyses tRNA(Ala) + L-alanine + ATP = L-alanyl-tRNA(Ala) + AMP + diphosphate. Functionally, catalyzes the attachment of alanine to tRNA(Ala) in a two-step reaction: alanine is first activated by ATP to form Ala-AMP and then transferred to the acceptor end of tRNA(Ala). Also edits incorrectly charged Ser-tRNA(Ala) and Gly-tRNA(Ala) via its editing domain. The chain is Alanine--tRNA ligase from Shigella dysenteriae serotype 1 (strain Sd197).